Reading from the N-terminus, the 1273-residue chain is Clustered mitochondria protein homolog (1273 aa).

The region spanning 344–599 (PANNADYSRM…NTYPLDVKFA (256 aa)) is the Clu domain. TPR repeat units lie at residues 981–1013 (SDQKWAEGSMLLNEDQNAALTLFAQAIAIKEEV), 1022–1055 (AEKYLTLSTVYSKLGLTPEAVAFCRKSCAIYERV), and 1151–1184 (ATLESRIGNLYASINDFHNAMEHISKTPRIFTRE). 2 disordered regions span residues 1217–1242 (AEQASVNSGSRKKNVNQKADAPKAEL) and 1254–1273 (IEGGSTEKSKKKSSKKKGKK). The span at 1262–1273 (SKKKSSKKKGKK) shows a compositional bias: basic residues.

Belongs to the CLU family. May associate with the eukaryotic translation initiation factor 3 (eIF-3) complex.

The protein resides in the cytoplasm. Functionally, mRNA-binding protein involved in proper cytoplasmic distribution of mitochondria. The protein is Clustered mitochondria protein homolog of Vanderwaltozyma polyspora (strain ATCC 22028 / DSM 70294 / BCRC 21397 / CBS 2163 / NBRC 10782 / NRRL Y-8283 / UCD 57-17) (Kluyveromyces polysporus).